The primary structure comprises 218 residues: Adenylate kinase (218 aa).

10–15 is an ATP binding site; sequence GAGKGT. The tract at residues 30–59 is NMP; sequence STGDMFRAAMADQTDLGVKAKAFIDKGELV. Residues Thr-31, Arg-36, 57–59, 85–88, and Gln-92 each bind AMP; these read ELV and GFPR. The segment at 126–164 is LID; sequence GRFICKTCGATYHKLYHPTQVEGTCDRCGGHVFFQREDD. Residue Arg-127 participates in ATP binding. The Zn(2+) site is built by Cys-130 and Cys-133. Residue 136-137 coordinates ATP; that stretch reads TY. Cys-150 and Cys-153 together coordinate Zn(2+). The AMP site is built by Arg-161 and Arg-172. Gln-200 is a binding site for ATP.

It belongs to the adenylate kinase family. As to quaternary structure, monomer.

It is found in the cytoplasm. It carries out the reaction AMP + ATP = 2 ADP. It functions in the pathway purine metabolism; AMP biosynthesis via salvage pathway; AMP from ADP: step 1/1. Its function is as follows. Catalyzes the reversible transfer of the terminal phosphate group between ATP and AMP. Plays an important role in cellular energy homeostasis and in adenine nucleotide metabolism. The protein is Adenylate kinase of Latilactobacillus sakei subsp. sakei (strain 23K) (Lactobacillus sakei subsp. sakei).